Consider the following 178-residue polypeptide: Epididymal-specific lipocalin-9 (178 aa).

Residues 1–16 form the signal peptide; the sequence is MVLLLVLGLVLSLATA. N-linked (GlcNAc...) asparagine glycans are attached at residues N46, N68, and N129. Residues C83 and C176 are joined by a disulfide bond.

The protein belongs to the calycin superfamily. Lipocalin family. Expressed in epididymis. Not detected in all other tissues tested.

Its subcellular location is the secreted. The chain is Epididymal-specific lipocalin-9 (Lcn9) from Mus musculus (Mouse).